Here is a 340-residue protein sequence, read N- to C-terminus: Ketol-acid reductoisomerase (NADP(+)) (340 aa).

The KARI N-terminal Rossmann domain maps to 3–182 (VQMEYEKDVK…GAARVGLLET (180 aa)). NADP(+)-binding positions include 26–29 (YGSQ), R49, S53, and 83–86 (DEIQ). Residue H108 is part of the active site. An NADP(+)-binding site is contributed by G134. A KARI C-terminal knotted domain is found at 183-328 (TYKEETEEDL…AELRKAMPFV (146 aa)). Mg(2+) contacts are provided by D191, E195, E227, and E231. S252 is a binding site for substrate.

This sequence belongs to the ketol-acid reductoisomerase family. The cofactor is Mg(2+).

It catalyses the reaction (2R)-2,3-dihydroxy-3-methylbutanoate + NADP(+) = (2S)-2-acetolactate + NADPH + H(+). It carries out the reaction (2R,3R)-2,3-dihydroxy-3-methylpentanoate + NADP(+) = (S)-2-ethyl-2-hydroxy-3-oxobutanoate + NADPH + H(+). Its pathway is amino-acid biosynthesis; L-isoleucine biosynthesis; L-isoleucine from 2-oxobutanoate: step 2/4. The protein operates within amino-acid biosynthesis; L-valine biosynthesis; L-valine from pyruvate: step 2/4. Involved in the biosynthesis of branched-chain amino acids (BCAA). Catalyzes an alkyl-migration followed by a ketol-acid reduction of (S)-2-acetolactate (S2AL) to yield (R)-2,3-dihydroxy-isovalerate. In the isomerase reaction, S2AL is rearranged via a Mg-dependent methyl migration to produce 3-hydroxy-3-methyl-2-ketobutyrate (HMKB). In the reductase reaction, this 2-ketoacid undergoes a metal-dependent reduction by NADPH to yield (R)-2,3-dihydroxy-isovalerate. This is Ketol-acid reductoisomerase (NADP(+)) from Streptococcus pneumoniae (strain Hungary19A-6).